The following is a 360-amino-acid chain: uncharacterized protein (360 aa).

4 to 22 (KVLHIGAGGFGERWCDTFL) is a binding site for NAD(+).

Its function is as follows. Could be a NAD-dependent oxidoreductase. This is an uncharacterized protein from Sinorhizobium fredii (strain NBRC 101917 / NGR234).